The following is a 195-amino-acid chain: Rac-like GTP-binding protein ARAC4 (195 aa).

Residues 12-19 (GDGAVGKT), 30-37 (FPTDYVPT), 59-63 (DTAGQ), and 117-120 (TKLD) contribute to the GTP site. An Effector region motif is present at residues 34–42 (YVPTVFDNF). At cysteine 192 the chain carries Cysteine methyl ester. Cysteine 192 is lipidated: S-geranylgeranyl cysteine. Residues 193 to 195 (AFL) constitute a propeptide, removed in mature form.

It belongs to the small GTPase superfamily. Rho family. As to quaternary structure, interacts with SPK1, ICR1, ICR5 and PIR. Ubiquitous.

The protein resides in the cytoplasm. It localises to the cell membrane. Inactive GDP-bound Rho GTPases reside in the cytosol, are found in a complex with Rho GDP-dissociation inhibitors (Rho GDIs), and are released from the GDI protein in order to translocate to membranes upon activation. Involved in cell polarity control during the actin-dependent tip growth of root hairs, thus regulating root hair length and root hair initiation. Contributes, in a SPK1-dependent manner, to the prevention of cortical microtubules organization into parallel arrays oriented perpendicular to the axis of cell elongation to limit anisotropic cell growth during petal development. May regulate a WAVE complex that activates the Arp2/3 complex. The chain is Rac-like GTP-binding protein ARAC4 from Arabidopsis thaliana (Mouse-ear cress).